The sequence spans 51 residues: Large ribosomal subunit protein eL39 (51 aa).

Belongs to the eukaryotic ribosomal protein eL39 family. Interacts with impact.

This Ictalurus punctatus (Channel catfish) protein is Large ribosomal subunit protein eL39 (rpl39).